The primary structure comprises 367 residues: Trans-enoyl reductase ffsC (367 aa).

55 to 58 (CDWK) serves as a coordination point for NADP(+). 143-150 (TGIGTLGL) provides a ligand contact to substrate. NADP(+) is bound by residues 203–206 (SAKN), tyrosine 221, and 268–269 (LE). Substrate is bound at residue 288–292 (GMAIL). 357–358 (VS) contacts NADP(+).

The protein belongs to the zinc-containing alcohol dehydrogenase family. In terms of assembly, monomer.

Its pathway is mycotoxin biosynthesis. Functionally, trans-enoyl reductase; part of the gene cluster that mediates the biosynthesis of the cytotoxic leucine-containing cytochalasans, including aspochalasin C, aspochalasin E, TMC-169, flavichalasine F, aspergillin PZ, aspochalasin M and flavichalasine G. The first step in the pathway is catalyzed by the hybrid PKS-NRPS ffsA that utilizes 8 units of malonyl-CoA to iteratively assemble the octaketide chain before addition of L-leucine by the C-terminal NRPS modules. Because ffsA lacks a designated enoylreductase (ER) domain, the required activity is provided the enoyl reductase fssC. The methyltransferase (MT) domain of ffsA catalyzes the alpha-methylation at C10 and C14 using S-adenosyl-L-methionine as the methyl-donating cosubstrate. Reduction by the hydrolyase ffsE, followed by dehydration and intra-molecular Diels-Alder cyclization by the Diels-Alderase ffsF then yield the required isoindolone-fused macrocycle. A number of oxidative steps catalyzed by the tailoring cytochrome P450 monooxygenase ffsD, the FAD-linked oxidoreductase ffsJ and the short-chain dehydrogenase/reductase ffsI, are further required to afford the final products. The chain is Trans-enoyl reductase ffsC from Aspergillus flavipes.